Here is a 152-residue protein sequence, read N- to C-terminus: UPF0178 protein SaurJH9_0705 (152 aa).

It belongs to the UPF0178 family.

The protein is UPF0178 protein SaurJH9_0705 of Staphylococcus aureus (strain JH9).